Here is a 199-residue protein sequence, read N- to C-terminus: Putative acetyltransferase SAV2555 (199 aa).

It belongs to the transferase hexapeptide repeat family.

This Staphylococcus aureus (strain Mu50 / ATCC 700699) protein is Putative acetyltransferase SAV2555.